The sequence spans 563 residues: Cytochrome b (563 aa).

12 consecutive transmembrane segments (helical) span residues 36–61 (SYWLGAMVAASFAYTIITGLFLLLYY), 81–104 (SVLLFSHLYGSYIMILLAYIHMFR), 119–141 (WVTGVLLLALTLGASFFGYSLVS), 193–220 (RLLGWHIIMVFLLGVLFLFHFMLSERYG), 255–276 (LSIVLITWGIILFVPNLLANIN), 326–345 (ILTIALLVVGLVILMLLPFL), 358–379 (FWTWIMTTLAVYLVELSVWGYL), 387–409 (TSAQIEFLGPPLVIIGIIVYLWP), 436–454 (ILLGAVGTLSFAATLFNFI), 458–476 (TLINGIILVPLGLFAIYAL), 505–527 (IAFFGIIALFVVSLVLLGLMWTL), and 539–557 (MDLGVILLLWGVAIQLYHY). Heme is bound by residues H87 and H101. Residues H198 and H212 each contribute to the heme site.

This sequence belongs to the cytochrome b family. In terms of assembly, it is a component of at least 2 distinct terminal oxidases, the quinol oxidase (SoxABC) and the alternate quinol oxidase with the core components SoxM and a Rieske Fe-S protein.

Its subcellular location is the cell membrane. Its function is as follows. Binds 2 heme groups (b586 and b606) which are not covalently bound to the protein. This Sulfolobus acidocaldarius (strain ATCC 33909 / DSM 639 / JCM 8929 / NBRC 15157 / NCIMB 11770) protein is Cytochrome b (soxC).